Consider the following 190-residue polypeptide: Imidazoleglycerol-phosphate dehydratase (190 aa).

This sequence belongs to the imidazoleglycerol-phosphate dehydratase family.

The protein localises to the cytoplasm. It carries out the reaction D-erythro-1-(imidazol-4-yl)glycerol 3-phosphate = 3-(imidazol-4-yl)-2-oxopropyl phosphate + H2O. It functions in the pathway amino-acid biosynthesis; L-histidine biosynthesis; L-histidine from 5-phospho-alpha-D-ribose 1-diphosphate: step 6/9. This chain is Imidazoleglycerol-phosphate dehydratase, found in Methanococcus vannielii (strain ATCC 35089 / DSM 1224 / JCM 13029 / OCM 148 / SB).